The chain runs to 274 residues: MPFRSNNPITRDELLSRFFPQFHPVTTFNSGLSGGSFLIEHQGQRFVVRQPHDPDAPQSAFLRQYRALSQLPACIAPKPHLYLRDWMVVDYLPGEVKTYLPDTNELAGLLYYLHQQPRFGWRITLLPLLELYWQQSDPARRTVGWLRMLKRLRKAREPRPLRLSPLHMDVHAGNLVHSVSGLKLIDWEYAGDGDIALELAAVWVENTEQHRQLVNDYATRAKIYPAQLWRQVRRWFPWLLMLKAGWFEYRWRQTGDQQFIRLADDTWRQLLIKQ.

This sequence belongs to the thiamine kinase family.

The enzyme catalyses thiamine + ATP = thiamine phosphate + ADP + H(+). Its pathway is cofactor biosynthesis; thiamine diphosphate biosynthesis; thiamine phosphate from thiamine: step 1/1. In terms of biological role, catalyzes the ATP-dependent phosphorylation of thiamine to thiamine phosphate. Is involved in thiamine salvage. This Shigella dysenteriae serotype 1 (strain Sd197) protein is Thiamine kinase.